Here is a 285-residue protein sequence, read N- to C-terminus: HTH-type transcriptional regulator MurR (285 aa).

The 77-residue stretch at 1-77 (MLYLTKISNA…MALIGEYSAS (77 aa)) folds into the HTH rpiR-type domain. Residues 37-56 (SRQMAKQLGISQSSIVKFAQ) constitute a DNA-binding region (H-T-H motif). Residues 128-279 (IIEVISKAPF…SLKMIQRSSE (152 aa)) form the SIS domain.

As to quaternary structure, homotetramer.

Its pathway is amino-sugar metabolism; N-acetylmuramate degradation [regulation]. Represses the expression of the murPQ operon involved in the uptake and degradation of N-acetylmuramic acid (MurNAc). Binds to two adjacent inverted repeats within the operator region. MurNAc 6-phosphate, the substrate of MurQ, is the specific inducer that weakens binding of MurR to the operator. This Shigella boydii serotype 4 (strain Sb227) protein is HTH-type transcriptional regulator MurR.